We begin with the raw amino-acid sequence, 555 residues long: Heterochromatin protein 1-binding protein 3 (555 aa).

N-acetylalanine is present on alanine 2. The residue at position 6 (serine 6) is a Phosphoserine. The tract at residues 29 to 134 is disordered; the sequence is KLGEKVEDNT…KEKKVKKTIP (106 aa). Threonine 51 carries the phosphothreonine modification. Over residues 51-67 the composition is skewed to basic and acidic residues; that stretch reads TPPKSKLAEGVEEKPEP. Residue lysine 64 forms a Glycyl lysine isopeptide (Lys-Gly) (interchain with G-Cter in SUMO2) linkage. Threonine 85 carries the post-translational modification Phosphothreonine. Lysine 97 is covalently cross-linked (Glycyl lysine isopeptide (Lys-Gly) (interchain with G-Cter in SUMO2)). The segment covering 100–127 has biased composition (basic and acidic residues); it reads PENEEKEENKPSEETKKDEKDQSKEKEK. 3 positions are modified to phosphoserine: serine 142, serine 155, and serine 156. The 76-residue stretch at 157–232 folds into the H15 1 domain; that stretch reads PRPKMDAILT…GASGSFVVVQ (76 aa). N6-acetyllysine is present on lysine 190. The disordered stretch occupies residues 227–254; it reads SFVVVQKSRKPPQKSRNRKNRSSAVDPE. Residues 233 to 247 show a composition bias toward basic residues; that stretch reads KSRKPPQKSRNRKNR. Phosphoserine occurs at positions 248 and 249. H15 domains lie at 255–330 and 337–413; these read PQVK…QLKK and LGGS…QLCF. A Glycyl lysine isopeptide (Lys-Gly) (interchain with G-Cter in SUMO2) cross-link involves residue lysine 258. The segment at 422 to 555 is disordered; sequence LFPKKEPDDS…TMKKSFKAKK (134 aa). Positions 430–452 are enriched in acidic residues; that stretch reads DSKDEDEDEDEDDSSEEDSEDEE. Serine 443, serine 444, and serine 448 each carry phosphoserine. Positions 491 to 512 are enriched in basic residues; sequence GKTRPLPKKAPPKAKSPAKKAR. The span at 513-532 shows a compositional bias: low complexity; that stretch reads PSPSVIKKPSGSSSKKPAAS. Positions 545 to 555 are enriched in basic residues; it reads STMKKSFKAKK.

In terms of assembly, interacts (via PxVxL motif) with CBX5.

The protein localises to the nucleus. Its subcellular location is the chromosome. Component of heterochromatin that maintains heterochromatin integrity during G1/S progression and regulates the duration of G1 phase to critically influence cell proliferative capacity. May play a role in hypoxia-induced oncogenesis. This chain is Heterochromatin protein 1-binding protein 3 (HP1BP3), found in Bos taurus (Bovine).